Reading from the N-terminus, the 465-residue chain is UDP-N-acetylmuramate--L-alanine ligase (465 aa).

112 to 118 contacts ATP; that stretch reads GTHGKTT.

The protein belongs to the MurCDEF family.

The protein localises to the cytoplasm. The catalysed reaction is UDP-N-acetyl-alpha-D-muramate + L-alanine + ATP = UDP-N-acetyl-alpha-D-muramoyl-L-alanine + ADP + phosphate + H(+). The protein operates within cell wall biogenesis; peptidoglycan biosynthesis. Its function is as follows. Cell wall formation. This is UDP-N-acetylmuramate--L-alanine ligase from Burkholderia vietnamiensis (strain G4 / LMG 22486) (Burkholderia cepacia (strain R1808)).